The primary structure comprises 57 residues: uncharacterized protein (57 aa).

This is an uncharacterized protein from Haemophilus influenzae (strain ATCC 51907 / DSM 11121 / KW20 / Rd).